The following is a 529-amino-acid chain: Neuronal acetylcholine receptor subunit alpha-2 (529 aa).

An N-terminal signal peptide occupies residues 1-26 (MGPSCPVFLSFTKLSLWWLLLTPAGG). The disordered stretch occupies residues 27 to 56 (EEAKRPPPRAPGDPLSSPSPTALPQGGSHT). At 27–264 (EEAKRPPPRA…VTYAFIIRRL (238 aa)) the chain is on the extracellular side. N-linked (GlcNAc...) asparagine glycans are attached at residues asparagine 79 and asparagine 129. A disulfide bridge connects residues cysteine 183 and cysteine 197. Residue asparagine 235 is glycosylated (N-linked (GlcNAc...) asparagine). An intrachain disulfide couples cysteine 247 to cysteine 248. Transmembrane regions (helical) follow at residues 265–289 (PLFY…VFYL), 297–315 (ITLC…LLIT), and 331–352 (YLLF…VLNV). Residues 353-502 (HHRSPSTHTM…WKYVAMVIDR (150 aa)) are Cytoplasmic-facing. The chain crosses the membrane as a helical span at residues 503–521 (IFLWLFIIVCFLGTIGLFL).

Belongs to the ligand-gated ion channel (TC 1.A.9) family. Acetylcholine receptor (TC 1.A.9.1) subfamily. Alpha-2/CHRNA2 sub-subfamily. In terms of assembly, neuronal AChR is composed of two different types of subunits: alpha and non-alpha (beta). CHRNA2/alpha-2 subunit can be combined to CHRNB2/beta-2 or CHRNB4/beta-4 to give rise to functional receptors. Both CHRNA2:CHRNB2 and CHRNA2:CHRNB4 nAChR complexes are heteropentamers with two subtypes: LS (low agonist sensitivity) with a (CHRNA2)3:(CHRNB2/4)2 and HS (high agonist sensitivity) with a (CHRNA2)2:(CHRNB2/4)3 stoichiometries; the subtypes differ in their subunit binding interfaces which are involved in ligand binding.

The protein localises to the synaptic cell membrane. Its subcellular location is the cell membrane. The catalysed reaction is Ca(2+)(in) = Ca(2+)(out). It catalyses the reaction K(+)(in) = K(+)(out). It carries out the reaction Na(+)(in) = Na(+)(out). Its function is as follows. Component of neuronal acetylcholine receptors (nAChRs) that function as pentameric, ligand-gated cation channels with high calcium permeability among other activities. nAChRs are excitatory neurotrasnmitter receptors formed by a collection of nAChR subunits known to mediate synaptic transmission in the nervous system and the neuromuscular junction. Each nAchR subunit confers differential attributes to channel properties, including activation, deactivation and desensitization kinetics, pH sensitivity, cation permeability, and binding to allosteric modulators. CHRNA2 forms heteropentameric neuronal acetylcholine receptors with CHRNB2 and CHRNB4 and plays a role in nicotine dependence. In Pan troglodytes (Chimpanzee), this protein is Neuronal acetylcholine receptor subunit alpha-2 (CHRNA2).